The sequence spans 501 residues: Acetylcholine receptor subunit beta (501 aa).

Residues 1-23 (MALGALLLLLGVLGTPLAPGARG) form the signal peptide. Residues 24 to 244 (SEAEGQLIKK…VIFYLIIRRK (221 aa)) lie on the Extracellular side of the membrane. Cysteines 151 and 165 form a disulfide. An N-linked (GlcNAc...) asparagine glycan is attached at Asn164. 3 helical membrane-spanning segments follow: residues 245–269 (PLFY…VFYL), 277–295 (MGLS…LLLA), and 311–332 (YLMF…VLNL). Residues 333–469 (HHRSPHTHQM…WQFVAMVVDR (137 aa)) lie on the Cytoplasmic side of the membrane. The disordered stretch occupies residues 362–382 (RPKPERDQLPEPHHSLSPRSG). Basic and acidic residues predominate over residues 363–375 (PKPERDQLPEPHH). Tyr390 bears the Phosphotyrosine; by Tyr-kinases mark. The chain crosses the membrane as a helical span at residues 470 to 488 (LFLWTFIVFTSVGTLVIFL).

Belongs to the ligand-gated ion channel (TC 1.A.9) family. Acetylcholine receptor (TC 1.A.9.1) subfamily. Beta-1/CHRNB1 sub-subfamily. In terms of assembly, pentamer of two alpha chains, and one each of the beta, delta, and gamma (in immature muscle) or epsilon (in mature muscle) chains. The muscle heteropentamer composed of alpha-1, beta-1, delta, epsilon subunits interacts with the alpha-conotoxin ImII.

The protein localises to the postsynaptic cell membrane. It localises to the cell membrane. The enzyme catalyses K(+)(in) = K(+)(out). The catalysed reaction is Na(+)(in) = Na(+)(out). Its function is as follows. After binding acetylcholine, the AChR responds by an extensive change in conformation that affects all subunits and leads to opening of an ion-conducting channel across the plasma membrane. This is Acetylcholine receptor subunit beta (Chrnb1) from Mus musculus (Mouse).